The chain runs to 745 residues: DEAD-box ATP-dependent RNA helicase 3A, chloroplastic (745 aa).

The N-terminal 41 residues, 1–41, are a transit peptide targeting the chloroplast; the sequence is MASLVTLPAIAFSNPATASGAVRLRAAAFRCWALRRRGWAV. A Q motif motif is present at residues 88-116; it reads LAIARLGLPDELVATLEKRGITHLFPIQR. The region spanning 119 to 295 is the Helicase ATP-binding domain; that stretch reads LIPALGGRDL…RRYLNNPLTI (177 aa). 132 to 139 lines the ATP pocket; it reads AKTGTGKT. The short motif at 243-246 is the DEAD box element; it reads DEAD. Residues 324 to 469 enclose the Helicase C-terminal domain; sequence ILSDLITVYA…ISPPSIEEVL (146 aa). The disordered stretch occupies residues 606–724; it reads LTKISKLPAL…SLGGRESSRS (119 aa). Residues 641–650 show a composition bias toward gly residues; it reads GGGASRGRGG. A compositionally biased stretch (basic and acidic residues) spans 656–670; the sequence is EDRYRRGGRSLRSDN. A compositionally biased stretch (low complexity) spans 687–724; that stretch reads RSSSSFGGRSSSYGSRGSPSPSFGVRSSSLGGRESSRS. A CCHC-type zinc finger spans residues 727–744; the sequence is GACFNCGESGHRASDCPN.

Belongs to the DEAD box helicase family. DDX21/DDX50 subfamily.

It is found in the plastid. The protein localises to the chloroplast. The catalysed reaction is ATP + H2O = ADP + phosphate + H(+). Nuclear genome-encoded factor involved in ribosome biogenesis in chloroplasts. Binds specific group II introns in chloroplasts and facilitates their splicing. Required for normal development of chloroplasts. This is DEAD-box ATP-dependent RNA helicase 3A, chloroplastic from Zea mays (Maize).